The chain runs to 365 residues: Heterogeneous nuclear ribonucleoproteins A1 homolog (365 aa).

The interval 4 to 94 is globular A domain; that stretch reads SEAPNEPEQL…EPKRAVSRED (91 aa). 2 consecutive RRM domains span residues 14–97 and 105–184; these read RKLF…DSSR and KKIF…LSKQ. The tract at residues 95–185 is globular B domain; that stretch reads SSRPGAHLTV…QVRKALSKQE (91 aa). Disordered stretches follow at residues 175–208 and 328–365; these read SQVRKALSKQEMASVSGSQRERGGSGNYGSRGGF and GPMKGGNYGGGRNSGPYGGGYGGGSASSSSGYGGGRRF. Composition is skewed to gly residues over residues 198–208 and 330–365; these read GSGNYGSRGGF and MKGGNYGGGRNSGPYGGGYGGGSASSSSGYGGGRRF. The segment at 321–359 is nuclear targeting sequence; that stretch reads SQSSSNFGPMKGGNYGGGRNSGPYGGGYGGGSASSSSGY.

It is found in the nucleus. The protein resides in the cytoplasm. Its function is as follows. This protein is a component of ribonucleosomes. The protein is Heterogeneous nuclear ribonucleoproteins A1 homolog (hnrnpa1) of Xenopus laevis (African clawed frog).